Consider the following 639-residue polypeptide: CREB3 regulatory factor (639 aa).

The interval 302-422 (PLPQEGPGSL…SVEDLKEVTS (121 aa)) is disordered. A compositionally biased stretch (low complexity) spans 310–328 (SLAAGESSSLSASTSVSDS). Positions 339-351 (LFVSDNLGEQPTK) are enriched in polar residues. Acidic residues predominate over residues 355 to 370 (EEDEEDEEDVDDEDHD). Basic and acidic residues predominate over residues 371 to 380 (EGFGSEHELS). The span at 381–401 (ENEEEEEEEEDYEDDKDDDIS) shows a compositional bias: acidic residues. One can recognise a bZIP domain in the interval 521–584 (TARPRSRKEK…VNRVQNPRDE (64 aa)). Positions 523–532 (RPRSRKEKNK) are basic motif. A leucine-zipper region spans residues 533–540 (LASRACRL).

The protein belongs to the bZIP family. CREBRF subfamily. As to quaternary structure, interacts (via leucine-zipper domain) with CREB3 (via leucine-zipper domain); the interaction promotes CREB3 degradation. In terms of processing, probably degraded by the proteasome.

The protein localises to the nucleus. Acts as a negative regulator of the endoplasmic reticulum stress response or unfolded protein response (UPR). Represses the transcriptional activity of CREB3 during the UPR. Recruits CREB3 into nuclear foci. The chain is CREB3 regulatory factor (CREBRF) from Homo sapiens (Human).